Here is a 613-residue protein sequence, read N- to C-terminus: Portal protein (613 aa).

The tract at residues Ala-577–Ser-613 is disordered. The segment covering Gly-592–Arg-605 has biased composition (basic and acidic residues).

The protein belongs to the herpesviridae portal protein family. In terms of assembly, homododecamerizes. Interacts with terminase subunits TRM1 and TRM3.

It localises to the virion. The protein resides in the host nucleus. The protein localises to the host cytoplasm. Functionally, forms a portal in the viral capsid through which viral DNA is translocated during DNA packaging. Assembles as a dodecamer at a single fivefold axe of the T=16 icosahedric capsid. Binds to the molecular motor that translocates the viral DNA, termed terminase. This is Portal protein from Epstein-Barr virus (strain B95-8) (HHV-4).